The chain runs to 63 residues: MAVPKKRTSMSKKRIRKNLWKKKTYFSIVQSYSLAKSRSFSGVSEHPKPKGFSRQQTNNRVLG.

Positions 38–63 (RSFSGVSEHPKPKGFSRQQTNNRVLG) are disordered. Polar residues predominate over residues 53-63 (SRQQTNNRVLG).

This sequence belongs to the bacterial ribosomal protein bL32 family.

The protein resides in the plastid. It is found in the chloroplast. In Oryza sativa (Rice), this protein is Large ribosomal subunit protein bL32c (rpl32).